The chain runs to 333 residues: Mycothiol acetyltransferase (333 aa).

N-acetyltransferase domains lie at 18–170 and 176–333; these read PTLS…LPEP and VTVR…AAAD. Glu-46 lines the 1D-myo-inositol 2-(L-cysteinylamino)-2-deoxy-alpha-D-glucopyranoside pocket. 98–100 contributes to the acetyl-CoA binding site; that stretch reads IVV. Positions 203, 242, and 261 each coordinate 1D-myo-inositol 2-(L-cysteinylamino)-2-deoxy-alpha-D-glucopyranoside. Acetyl-CoA is bound by residues 265 to 267 and 272 to 278; these read VGV and GGAGLGR. Tyr-299 is a binding site for 1D-myo-inositol 2-(L-cysteinylamino)-2-deoxy-alpha-D-glucopyranoside. An acetyl-CoA-binding site is contributed by 304–309; that stretch reads NERAVR.

Belongs to the acetyltransferase family. MshD subfamily. As to quaternary structure, monomer.

The enzyme catalyses 1D-myo-inositol 2-(L-cysteinylamino)-2-deoxy-alpha-D-glucopyranoside + acetyl-CoA = mycothiol + CoA + H(+). Catalyzes the transfer of acetyl from acetyl-CoA to desacetylmycothiol (Cys-GlcN-Ins) to form mycothiol. This Frankia alni (strain DSM 45986 / CECT 9034 / ACN14a) protein is Mycothiol acetyltransferase.